Reading from the N-terminus, the 196-residue chain is MSDLLNAAALDQLFRTARTQNAFLDTPVSEDLLRELYDLVKWGPTAANGSPARFVFVTTAEGKEKLKPALSEGNAAKTLAAPVTAIIGFDEDFHEKLPYLFPHADAKSWFDGPRTARTESAFRNSSLQGAYLILAARALGLDAGPMSGFDNAKVDAAFFAGTPIKSNFLVNLGYGDPAGLFPRLPRLSFDEAARIA.

This sequence belongs to the nitroreductase family. HadB/RutE subfamily. FMN is required as a cofactor.

The sequence is that of Putative NADH dehydrogenase/NAD(P)H nitroreductase xcc-b100_0585 from Xanthomonas campestris pv. campestris (strain B100).